Consider the following 156-residue polypeptide: 6,7-dimethyl-8-ribityllumazine synthase (156 aa).

Residues phenylalanine 25, 59-61 (AFE), and 83-85 (AVI) contribute to the 5-amino-6-(D-ribitylamino)uracil site. 88–89 (AT) contributes to the (2S)-2-hydroxy-3-oxobutyl phosphate binding site. Histidine 91 (proton donor) is an active-site residue. 5-amino-6-(D-ribitylamino)uracil is bound at residue phenylalanine 116. Arginine 130 is a binding site for (2S)-2-hydroxy-3-oxobutyl phosphate.

This sequence belongs to the DMRL synthase family.

The enzyme catalyses (2S)-2-hydroxy-3-oxobutyl phosphate + 5-amino-6-(D-ribitylamino)uracil = 6,7-dimethyl-8-(1-D-ribityl)lumazine + phosphate + 2 H2O + H(+). Its pathway is cofactor biosynthesis; riboflavin biosynthesis; riboflavin from 2-hydroxy-3-oxobutyl phosphate and 5-amino-6-(D-ribitylamino)uracil: step 1/2. Catalyzes the formation of 6,7-dimethyl-8-ribityllumazine by condensation of 5-amino-6-(D-ribitylamino)uracil with 3,4-dihydroxy-2-butanone 4-phosphate. This is the penultimate step in the biosynthesis of riboflavin. This is 6,7-dimethyl-8-ribityllumazine synthase from Nitratidesulfovibrio vulgaris (strain DSM 19637 / Miyazaki F) (Desulfovibrio vulgaris).